A 105-amino-acid polypeptide reads, in one-letter code: Nucleoid-associated protein cu1912 (105 aa).

It belongs to the YbaB/EbfC family. As to quaternary structure, homodimer.

The protein resides in the cytoplasm. It is found in the nucleoid. Its function is as follows. Binds to DNA and alters its conformation. May be involved in regulation of gene expression, nucleoid organization and DNA protection. The protein is Nucleoid-associated protein cu1912 of Corynebacterium urealyticum (strain ATCC 43042 / DSM 7109).